A 69-amino-acid chain; its full sequence is Putative membrane protein insertion efficiency factor (69 aa).

It belongs to the UPF0161 family.

It localises to the cell membrane. Functionally, could be involved in insertion of integral membrane proteins into the membrane. In Clostridium kluyveri (strain NBRC 12016), this protein is Putative membrane protein insertion efficiency factor.